A 512-amino-acid polypeptide reads, in one-letter code: Maturase K (512 aa).

It belongs to the intron maturase 2 family. MatK subfamily.

Its subcellular location is the plastid. It localises to the chloroplast. Its function is as follows. Usually encoded in the trnK tRNA gene intron. Probably assists in splicing its own and other chloroplast group II introns. The protein is Maturase K of Lemna gibba (Swollen duckweed).